We begin with the raw amino-acid sequence, 262 residues long: 5'-nucleotidase SurE (262 aa).

Residues Asp8, Asp9, Ser40, and Asn92 each coordinate a divalent metal cation.

Belongs to the SurE nucleotidase family. A divalent metal cation serves as cofactor.

It is found in the cytoplasm. It catalyses the reaction a ribonucleoside 5'-phosphate + H2O = a ribonucleoside + phosphate. Its function is as follows. Nucleotidase that shows phosphatase activity on nucleoside 5'-monophosphates. This Xylella fastidiosa (strain M23) protein is 5'-nucleotidase SurE.